A 620-amino-acid polypeptide reads, in one-letter code: uncharacterized protein (620 aa).

It belongs to the chlamydial CPn_0512/CT_425/TC_0708 family.

This is an uncharacterized protein from Chlamydia pneumoniae (Chlamydophila pneumoniae).